The following is a 157-amino-acid chain: Transcriptional regulator MraZ (157 aa).

2 consecutive SpoVT-AbrB domains span residues Thr-7–Glu-54 and Val-83–Leu-126.

The protein belongs to the MraZ family. Forms oligomers.

Its subcellular location is the cytoplasm. The protein localises to the nucleoid. In Flavobacterium psychrophilum (strain ATCC 49511 / DSM 21280 / CIP 103535 / JIP02/86), this protein is Transcriptional regulator MraZ.